Here is a 207-residue protein sequence, read N- to C-terminus: Probable GTP-binding protein EngB (207 aa).

The EngB-type G domain maps to 23–203 (GAPEVCFVGR…GAHIENWISP (181 aa)). GTP contacts are provided by residues 31 to 38 (GRSNAGKS), 58 to 62 (GRTRL), 83 to 86 (DLPG), 150 to 153 (TKAD), and 182 to 184 (FSS). Mg(2+) contacts are provided by S38 and T60.

Belongs to the TRAFAC class TrmE-Era-EngA-EngB-Septin-like GTPase superfamily. EngB GTPase family. Requires Mg(2+) as cofactor.

Its function is as follows. Necessary for normal cell division and for the maintenance of normal septation. In Bordetella bronchiseptica (strain ATCC BAA-588 / NCTC 13252 / RB50) (Alcaligenes bronchisepticus), this protein is Probable GTP-binding protein EngB.